A 433-amino-acid chain; its full sequence is Dihydroorotase (433 aa).

Zn(2+)-binding residues include His-63 and His-65. Substrate-binding positions include His-65–Arg-67 and Asn-97. The Zn(2+) site is built by Asp-155, His-182, and His-235. Asn-283 contacts substrate. Asp-310 is a Zn(2+) binding site. Asp-310 is an active-site residue. A substrate-binding site is contributed by His-314.

The protein belongs to the metallo-dependent hydrolases superfamily. DHOase family. Class I DHOase subfamily. Zn(2+) is required as a cofactor.

It catalyses the reaction (S)-dihydroorotate + H2O = N-carbamoyl-L-aspartate + H(+). Its pathway is pyrimidine metabolism; UMP biosynthesis via de novo pathway; (S)-dihydroorotate from bicarbonate: step 3/3. Its function is as follows. Catalyzes the reversible cyclization of carbamoyl aspartate to dihydroorotate. This chain is Dihydroorotase, found in Anaeromyxobacter sp. (strain K).